A 142-amino-acid chain; its full sequence is uncharacterized protein (142 aa).

This is an uncharacterized protein from Bacillus anthracis.